A 147-amino-acid polypeptide reads, in one-letter code: Cytochrome c-type biogenesis protein CcmE (147 aa).

Residues 1 to 7 lie on the Cytoplasmic side of the membrane; the sequence is MTVRQRR. The chain crosses the membrane as a helical; Signal-anchor for type II membrane protein span at residues 8–28; sequence FAMVILVVIGVSIATGLGLKA. At 29–147 the chain is on the periplasmic side; the sequence is FQENILFFYN…KTKANTEDKL (119 aa). 2 residues coordinate heme: His123 and Tyr127.

Belongs to the CcmE/CycJ family.

The protein localises to the cell inner membrane. In terms of biological role, heme chaperone required for the biogenesis of c-type cytochromes. Transiently binds heme delivered by CcmC and transfers the heme to apo-cytochromes in a process facilitated by CcmF and CcmH. The chain is Cytochrome c-type biogenesis protein CcmE from Nitrosococcus oceani (strain ATCC 19707 / BCRC 17464 / JCM 30415 / NCIMB 11848 / C-107).